Reading from the N-terminus, the 405-residue chain is Coiled-coil domain-containing protein 91 (405 aa).

Residues 1-16 (MDDDDFGGFEAAETFD) form a GGA1-binding motif region. Residues 1 to 27 (MDDDDFGGFEAAETFDGGNGETQTTSP) are disordered. Phosphoserine occurs at positions 43 and 46. Positions 126–376 (GANVSNIQLR…QKRLDQVIRQ (251 aa)) form a coiled coil. The tract at residues 210–377 (LSIIVDEYKH…KRLDQVIRQR (168 aa)) is homodimerization.

As to quaternary structure, homodimer. Interacts with GGA1, GGA2 and AP1G1.

It localises to the membrane. It is found in the golgi apparatus. The protein localises to the trans-Golgi network membrane. Its subcellular location is the trans-Golgi network. Involved in the regulation of membrane traffic through the trans-Golgi network (TGN). Functions in close cooperation with the GGAs in the sorting of hydrolases to lysosomes. The sequence is that of Coiled-coil domain-containing protein 91 (CCDC91) from Pongo abelii (Sumatran orangutan).